The sequence spans 562 residues: uncharacterized protein (562 aa).

The next 5 membrane-spanning stretches (helical) occupy residues 15-34 (WGGGVAHSVLILSLVIAFGI), 41-63 (VAGISLGVTWILFVGIVFGHFNL), 78-97 (LILFVYSIGLQVGPGFFSAF), 104-126 (LNMLAMIVVFAGVIITLALHFIT), and 165-187 (IALGYAVAYPLGVVGCIMSLLGL). RCK C-terminal domains follow at residues 204 to 286 (QGLG…ITAF) and 289 to 374 (KPIE…VLGN). Transmembrane regions (helical) follow at residues 384–403 (LIPIFLGIALGCILGSIPFM), 413–430 (LGLAGGPLIVSILISRFG), 450–472 (IGISLFLACVGLGAGDGFVETII), 476–498 (GYVWIAYGMIITIVPLLLAGFIG), 505–524 (NYYTLIGVLAGSTTNPPALA), and 539–561 (YATVYPLTMFLRVLTAQLLILSL).

This sequence belongs to the AAE transporter (TC 2.A.81) family.

It localises to the cell membrane. This is an uncharacterized protein from Bacteroides fragilis (strain YCH46).